A 259-amino-acid chain; its full sequence is Protein unc-50 homolog (259 aa).

Residue Met1 is modified to N-acetylmethionine. The span at 1–17 (MLPSTSVNSPAQGNGVL) shows a compositional bias: polar residues. The interval 1–22 (MLPSTSVNSPAQGNGVLSSRDA) is disordered. Residues 1–82 (MLPSTSVNSP…TKDQWARDDP (82 aa)) are Cytoplasmic-facing. Ser6 bears the Phosphoserine mark. Residues 83 to 103 (AFLVLLSIWLCVSTIGFGFVL) form a helical membrane-spanning segment. At 104-115 (DMGFFETIKLLL) the chain is on the lumenal side. Residues 116-136 (WVVFIDCVGVGLLISTLMWFI) form a helical membrane-spanning segment. Residues 137–163 (SNKYLVKRQSRDYDVEWGYAFDVHLNA) are Cytoplasmic-facing. Residues 164–184 (FYPLLVILHFIQLFFINHVIL) form a helical membrane-spanning segment. At 185-187 (TDT) the chain is on the lumenal side. Residues 188–208 (FIGYLVGNTLWLVAVGYYIYV) form a helical membrane-spanning segment. At 209–222 (TFLGYSALPFLKNT) the chain is on the cytoplasmic side. Residues 223–243 (VILLYPFAPLILLYGLSLALG) form a helical membrane-spanning segment. Topologically, residues 244 to 259 (WNFTHTLCSFYKYRVK) are lumenal.

The protein belongs to the unc-50 family.

The protein resides in the nucleus inner membrane. The protein localises to the golgi apparatus membrane. Functionally, involved in the cell surface expression of neuronal nicotinic receptors. Binds RNA. This is Protein unc-50 homolog (UNC50) from Bos taurus (Bovine).